Reading from the N-terminus, the 361-residue chain is Ribosomal RNA large subunit methyltransferase M (361 aa).

S-adenosyl-L-methionine-binding positions include serine 187, 220–223 (CPGG), aspartate 239, aspartate 259, and aspartate 276. Lysine 305 (proton acceptor) is an active-site residue.

It belongs to the class I-like SAM-binding methyltransferase superfamily. RNA methyltransferase RlmE family. RlmM subfamily. In terms of assembly, monomer.

The protein resides in the cytoplasm. It carries out the reaction cytidine(2498) in 23S rRNA + S-adenosyl-L-methionine = 2'-O-methylcytidine(2498) in 23S rRNA + S-adenosyl-L-homocysteine + H(+). Its function is as follows. Catalyzes the 2'-O-methylation at nucleotide C2498 in 23S rRNA. This chain is Ribosomal RNA large subunit methyltransferase M, found in Shewanella sp. (strain W3-18-1).